The primary structure comprises 161 residues: Protein-export protein SecB (161 aa).

This sequence belongs to the SecB family. In terms of assembly, homotetramer, a dimer of dimers. One homotetramer interacts with 1 SecA dimer.

It localises to the cytoplasm. One of the proteins required for the normal export of preproteins out of the cell cytoplasm. It is a molecular chaperone that binds to a subset of precursor proteins, maintaining them in a translocation-competent state. It also specifically binds to its receptor SecA. This Pseudomonas putida (strain ATCC 700007 / DSM 6899 / JCM 31910 / BCRC 17059 / LMG 24140 / F1) protein is Protein-export protein SecB.